Reading from the N-terminus, the 557-residue chain is DNA ligase (557 aa).

Glu-251 contacts ATP. The active-site N6-AMP-lysine intermediate is Lys-253. 6 residues coordinate ATP: Arg-258, Arg-273, Glu-303, Phe-342, Arg-418, and Lys-424.

It belongs to the ATP-dependent DNA ligase family. Requires Mg(2+) as cofactor.

The enzyme catalyses ATP + (deoxyribonucleotide)n-3'-hydroxyl + 5'-phospho-(deoxyribonucleotide)m = (deoxyribonucleotide)n+m + AMP + diphosphate.. DNA ligase that seals nicks in double-stranded DNA during DNA replication, DNA recombination and DNA repair. The polypeptide is DNA ligase (Methanosphaera stadtmanae (strain ATCC 43021 / DSM 3091 / JCM 11832 / MCB-3)).